The sequence spans 93 residues: Small ribosomal subunit protein uS19 (93 aa).

This sequence belongs to the universal ribosomal protein uS19 family.

In terms of biological role, protein S19 forms a complex with S13 that binds strongly to the 16S ribosomal RNA. This is Small ribosomal subunit protein uS19 from Oenococcus oeni (strain ATCC BAA-331 / PSU-1).